The following is a 110-amino-acid chain: Phosphoribosyl-ATP pyrophosphatase (110 aa).

Belongs to the PRA-PH family.

It localises to the cytoplasm. It carries out the reaction 1-(5-phospho-beta-D-ribosyl)-ATP + H2O = 1-(5-phospho-beta-D-ribosyl)-5'-AMP + diphosphate + H(+). The protein operates within amino-acid biosynthesis; L-histidine biosynthesis; L-histidine from 5-phospho-alpha-D-ribose 1-diphosphate: step 2/9. The chain is Phosphoribosyl-ATP pyrophosphatase from Pseudomonas syringae pv. tomato (strain ATCC BAA-871 / DC3000).